Reading from the N-terminus, the 149-residue chain is Probable calcium-binding protein CML25/26 (149 aa).

EF-hand domains follow at residues 1 to 35 (MASS…ALGE), 37 to 72 (VSEE…HQLQ), 77 to 113 (ESLR…LGSE), and 117 to 149 (LEME…MLMA). Ca(2+) is bound by residues Asp-13, Asp-15, Asp-17, Lys-19, Glu-24, Asp-50, Asp-52, Asp-54, and Glu-61. 4 residues coordinate Ca(2+): Asp-130, Asn-132, Asp-134, and Glu-141.

Its function is as follows. Potential calcium sensor. The protein is Probable calcium-binding protein CML25/26 (CML25) of Oryza sativa subsp. japonica (Rice).